We begin with the raw amino-acid sequence, 100 residues long: Urease subunit gamma (100 aa).

The protein belongs to the urease gamma subunit family. Heterotrimer of UreA (gamma), UreB (beta) and UreC (alpha) subunits. Three heterotrimers associate to form the active enzyme.

It localises to the cytoplasm. It carries out the reaction urea + 2 H2O + H(+) = hydrogencarbonate + 2 NH4(+). It functions in the pathway nitrogen metabolism; urea degradation; CO(2) and NH(3) from urea (urease route): step 1/1. The polypeptide is Urease subunit gamma (Pseudomonas putida (strain W619)).